The chain runs to 62 residues: Phospholipase A2 superbin a (62 aa).

Positions 28, 30, and 32 each coordinate Ca(2+). A disulfide bridge links Cys29 with Cys45. His48 is an active-site residue. Asp49 contributes to the Ca(2+) binding site.

It depends on Ca(2+) as a cofactor. As to expression, expressed by the venom gland.

The protein localises to the secreted. The catalysed reaction is a 1,2-diacyl-sn-glycero-3-phosphocholine + H2O = a 1-acyl-sn-glycero-3-phosphocholine + a fatty acid + H(+). Snake venom phospholipase A2 (PLA2) that inhibits collagen-induced platelet aggregation. In terms of inhibition of platelet aggregation, superbin a is more potent as superbin b, c, and d. PLA2 catalyzes the calcium-dependent hydrolysis of the 2-acyl groups in 3-sn-phosphoglycerides. This chain is Phospholipase A2 superbin a, found in Austrelaps superbus (Lowland copperhead snake).